We begin with the raw amino-acid sequence, 227 residues long: Cytochrome c oxidase subunit 2 (227 aa).

The Mitochondrial intermembrane portion of the chain corresponds to 1 to 14 (MAYPHQLGFQDATS). The chain crosses the membrane as a helical span at residues 15–45 (PIMEELLSFHDHTLMIVFLISSLVLYLISLM). The Mitochondrial matrix segment spans residues 46 to 59 (LTTKLTHTSTMDAQ). A helical transmembrane segment spans residues 60-87 (EVETVWTILPAIILIMIALPSLRILYMM). The Mitochondrial intermembrane segment spans residues 88-227 (DEINNPLLTV…SFENWTTSMT (140 aa)). Cu cation contacts are provided by His161, Cys196, Glu198, Cys200, His204, and Met207. Glu198 provides a ligand contact to Mg(2+).

It belongs to the cytochrome c oxidase subunit 2 family. In terms of assembly, component of the cytochrome c oxidase (complex IV, CIV), a multisubunit enzyme composed of 14 subunits. The complex is composed of a catalytic core of 3 subunits MT-CO1, MT-CO2 and MT-CO3, encoded in the mitochondrial DNA, and 11 supernumerary subunits COX4I, COX5A, COX5B, COX6A, COX6B, COX6C, COX7A, COX7B, COX7C, COX8 and NDUFA4, which are encoded in the nuclear genome. The complex exists as a monomer or a dimer and forms supercomplexes (SCs) in the inner mitochondrial membrane with NADH-ubiquinone oxidoreductase (complex I, CI) and ubiquinol-cytochrome c oxidoreductase (cytochrome b-c1 complex, complex III, CIII), resulting in different assemblies (supercomplex SCI(1)III(2)IV(1) and megacomplex MCI(2)III(2)IV(2)). Found in a complex with TMEM177, COA6, COX18, COX20, SCO1 and SCO2. Interacts with TMEM177 in a COX20-dependent manner. Interacts with COX20. Interacts with COX16. The cofactor is Cu cation.

It localises to the mitochondrion inner membrane. It catalyses the reaction 4 Fe(II)-[cytochrome c] + O2 + 8 H(+)(in) = 4 Fe(III)-[cytochrome c] + 2 H2O + 4 H(+)(out). Its function is as follows. Component of the cytochrome c oxidase, the last enzyme in the mitochondrial electron transport chain which drives oxidative phosphorylation. The respiratory chain contains 3 multisubunit complexes succinate dehydrogenase (complex II, CII), ubiquinol-cytochrome c oxidoreductase (cytochrome b-c1 complex, complex III, CIII) and cytochrome c oxidase (complex IV, CIV), that cooperate to transfer electrons derived from NADH and succinate to molecular oxygen, creating an electrochemical gradient over the inner membrane that drives transmembrane transport and the ATP synthase. Cytochrome c oxidase is the component of the respiratory chain that catalyzes the reduction of oxygen to water. Electrons originating from reduced cytochrome c in the intermembrane space (IMS) are transferred via the dinuclear copper A center (CU(A)) of subunit 2 and heme A of subunit 1 to the active site in subunit 1, a binuclear center (BNC) formed by heme A3 and copper B (CU(B)). The BNC reduces molecular oxygen to 2 water molecules using 4 electrons from cytochrome c in the IMS and 4 protons from the mitochondrial matrix. The polypeptide is Cytochrome c oxidase subunit 2 (MT-CO2) (Georychus capensis (Cape mole rat)).